A 356-amino-acid chain; its full sequence is Sorbitol dehydrogenase (356 aa).

A Zn(2+)-binding site is contributed by cysteine 44. Residue tyrosine 50 coordinates substrate. The Zn(2+) site is built by histidine 69 and glutamate 70. Glutamate 155 is a binding site for substrate. NAD(+)-binding residues include isoleucine 183, aspartate 203, and arginine 208. Serine 210 and serine 224 each carry phosphoserine. NAD(+) is bound by residues 272–274 (VGL) and 296–298 (VFR). Substrate-binding residues include arginine 298 and tyrosine 299.

This sequence belongs to the zinc-containing alcohol dehydrogenase family. In terms of assembly, homotetramer. It depends on Zn(2+) as a cofactor. As to expression, expressed in lens.

It localises to the mitochondrion membrane. Its subcellular location is the cell projection. The protein resides in the cilium. The protein localises to the flagellum. The catalysed reaction is xylitol + NAD(+) = D-xylulose + NADH + H(+). The enzyme catalyses keto-D-fructose + NADH + H(+) = D-sorbitol + NAD(+). It carries out the reaction L-iditol + NAD(+) = keto-L-sorbose + NADH + H(+). Its activity is regulated as follows. Inhibited in vitro by metal chelators such as EDTA and 1,10-phenanthroline. In terms of biological role, polyol dehydrogenase that catalyzes the reversible NAD(+)-dependent oxidation of various sugar alcohols. Is mostly active with xylitol, D-sorbitol (D-glucitol) and L-iditol as substrates, leading to the C2-oxidized products D-xylulose, D-fructose and L-sorbose, respectively. Is a key enzyme in the polyol pathway that interconverts glucose and fructose via sorbitol, which constitutes an important alternate route for glucose metabolism. May play a role in sperm motility by using sorbitol as an alternative energy source for sperm motility. Cannot use NADP(+) as the electron acceptor. Has no activity on ethanol, methanol, glycerol, galactitol and fructose 6-phosphate. The polypeptide is Sorbitol dehydrogenase (SORD) (Bos taurus (Bovine)).